Here is a 372-residue protein sequence, read N- to C-terminus: Alpha-parvin (372 aa).

The tract at residues 1–31 (MATSPQKSPLVPKSPTPKSPPSRKKDDSFLG) is disordered. An N-acetylalanine modification is found at Ala2. Residues Ser8, Ser14, and Ser19 each carry the phosphoserine modification. The interaction with ARHGAP31 stretch occupies residues 21–25 (PSRKK). Residues Ser28 and Ser62 each carry the phosphoserine modification. 2 Calponin-homology (CH) domains span residues 95 to 202 (QELM…QYFR) and 262 to 369 (NVVK…TKYR). The interval 223 to 372 (GILQSRQIQE…NLFTKYRNVE (150 aa)) is required for interaction with TESK1 and ILK.

The protein belongs to the parvin family. In terms of assembly, component of the heterotrimeric IPP (ILK-PINCH-PARVIN) complex composed of ILK, LIMS1/PINCH and PARVA; the complex binds to F-actin via the C-terminal tail of LIMS1 and the N-terminal region of PARVA, promoting F-actin filament bundling. Interacts with TGFB1I1. Interacts with ARHGAP31. Interacts with the actin cytoskeleton. Interacts (via C-terminus) with TESK1 (via C-terminus); the interaction inhibits TESK1 kinase activity. Interacts with PXN/PAXILLIN (via LD motif 4).

The protein resides in the cell junction. It localises to the focal adhesion. Its subcellular location is the cell membrane. It is found in the cytoplasm. The protein localises to the cytoskeleton. The protein resides in the myofibril. It localises to the sarcomere. Its subcellular location is the z line. Functionally, plays a role in sarcomere organization and in smooth muscle cell contraction. Required for normal development of the embryonic cardiovascular system, and for normal septation of the heart outflow tract. Plays a role in sprouting angiogenesis and is required for normal adhesion of vascular smooth muscle cells to endothelial cells during blood vessel development. Plays a role in the reorganization of the actin cytoskeleton, formation of lamellipodia and ciliogenesis. Plays a role in the establishment of cell polarity, cell adhesion, cell spreading, and directed cell migration. Within the IPP (ILK-PINCH-PARVIN) complex, binds to F-actin, promoting F-actin bundling, a process required to generate force for actin cytoskeleton reorganization and subsequent dynamic cell adhesion events such as cell spreading and migration. This chain is Alpha-parvin (Parva), found in Mus musculus (Mouse).